Consider the following 348-residue polypeptide: Dihydroorotase (348 aa).

Zn(2+) is bound by residues His14 and His16. Residues 16–18 (HLR) and Asn42 contribute to the substrate site. Residues Lys100, His137, and His175 each contribute to the Zn(2+) site. Lys100 is modified (N6-carboxylysine). His137 contacts substrate. Leu220 is a substrate binding site. Asp248 is a Zn(2+) binding site. Residue Asp248 is part of the active site. 2 residues coordinate substrate: His252 and Ala264.

The protein belongs to the metallo-dependent hydrolases superfamily. DHOase family. Class II DHOase subfamily. As to quaternary structure, homodimer. Zn(2+) is required as a cofactor.

It catalyses the reaction (S)-dihydroorotate + H2O = N-carbamoyl-L-aspartate + H(+). It participates in pyrimidine metabolism; UMP biosynthesis via de novo pathway; (S)-dihydroorotate from bicarbonate: step 3/3. Functionally, catalyzes the reversible cyclization of carbamoyl aspartate to dihydroorotate. This is Dihydroorotase from Azotobacter vinelandii (strain DJ / ATCC BAA-1303).